The primary structure comprises 486 residues: Ribosomal RNA small subunit methyltransferase F (486 aa).

S-adenosyl-L-methionine contacts are provided by residues 124–130 (ASAPGSK), Glu148, Asp175, and Asp193. Cys246 functions as the Nucleophile in the catalytic mechanism.

The protein belongs to the class I-like SAM-binding methyltransferase superfamily. RsmB/NOP family.

Its subcellular location is the cytoplasm. It catalyses the reaction cytidine(1407) in 16S rRNA + S-adenosyl-L-methionine = 5-methylcytidine(1407) in 16S rRNA + S-adenosyl-L-homocysteine + H(+). In terms of biological role, specifically methylates the cytosine at position 1407 (m5C1407) of 16S rRNA. The chain is Ribosomal RNA small subunit methyltransferase F from Shewanella baltica (strain OS155 / ATCC BAA-1091).